A 721-amino-acid chain; its full sequence is Protein Hook homolog 2 (721 aa).

The Calponin-homology (CH) domain maps to 7 to 123 (VELCDSLLTW…KMVQLVLGCA (117 aa)). 2 coiled-coil regions span residues 181–425 (LSED…RCSH) and 484–659 (DLQN…EKLI). Positions 696-721 (TNARRGQISRSHTLLPRYTDKRQSLS) are disordered.

This sequence belongs to the hook family. Interacts with microtubules.

The protein localises to the cytoplasm. It localises to the cytoskeleton. The protein resides in the microtubule organizing center. It is found in the centrosome. In terms of biological role, may function to promote vesicle trafficking and/or fusion. May contribute to the establishment and maintenance of centrosome function. This chain is Protein Hook homolog 2 (hook2), found in Xenopus laevis (African clawed frog).